The primary structure comprises 408 residues: GDSL esterase/lipase At1g54790 (408 aa).

The first 24 residues, 1-24, serve as a signal peptide directing secretion; the sequence is MNITKMKLFYVILFFISSLQISNS. Ser38 (nucleophile) is an active-site residue. N-linked (GlcNAc...) asparagine glycans are attached at residues Asn273, Asn289, and Asn361. Active-site residues include Asp370 and His373.

This sequence belongs to the 'GDSL' lipolytic enzyme family.

The protein localises to the secreted. This is GDSL esterase/lipase At1g54790 from Arabidopsis thaliana (Mouse-ear cress).